We begin with the raw amino-acid sequence, 227 residues long: GTPase ERas (227 aa).

The span at Met-1–Thr-19 shows a compositional bias: polar residues. Positions Met-1–Ser-25 are disordered. Gly-48–Ser-55 contributes to the GTP binding site. Positions His-70–Tyr-78 match the Effector region motif. GTP-binding positions include Asp-95–Gln-99 and Asn-151–Asp-154. 2 S-palmitoyl cysteine lipidation sites follow: Cys-220 and Cys-222. Cys-224 is modified (cysteine methyl ester). Cys-224 is lipidated: S-farnesyl cysteine. Positions Ser-225 to Ala-227 are cleaved as a propeptide — removed in mature form.

Belongs to the small GTPase superfamily. Ras family. In terms of assembly, interacts with PIK3CD. As to expression, expressed in several undifferentiated mouse embryonic stem cell lines.

It is found in the cell membrane. It catalyses the reaction GTP + H2O = GDP + phosphate + H(+). With respect to regulation, alternates between an inactive form bound to GDP and an active form bound to GTP. Activated by a guanine nucleotide-exchange factor (GEF) and inactivated by a GTPase-activating protein (GAP). Its function is as follows. Ras proteins bind GDP/GTP and possess intrinsic GTPase activity. Plays an important role in the tumor-like growth properties of embryonic stem cells. This Mus musculus (Mouse) protein is GTPase ERas (Eras).